The chain runs to 139 residues: Ribonuclease P/MRP protein subunit POP5 (139 aa).

Belongs to the eukaryotic/archaeal RNase P protein component 2 family.

The protein resides in the nucleus. It catalyses the reaction Endonucleolytic cleavage of RNA, removing 5'-extranucleotides from tRNA precursor.. In terms of biological role, component of ribonuclease P, a protein complex that generates mature tRNA molecules by cleaving their 5'-ends. Also a component of RNase MRP, which cleaves pre-rRNA sequences. The sequence is that of Ribonuclease P/MRP protein subunit POP5 from Schizosaccharomyces pombe (strain 972 / ATCC 24843) (Fission yeast).